We begin with the raw amino-acid sequence, 128 residues long: Large ribosomal subunit protein uL24 (128 aa).

Belongs to the universal ribosomal protein uL24 family. In terms of assembly, part of the 50S ribosomal subunit.

Its function is as follows. One of two assembly initiator proteins, it binds directly to the 5'-end of the 23S rRNA, where it nucleates assembly of the 50S subunit. Located at the polypeptide exit tunnel on the outside of the subunit. In Pyrobaculum calidifontis (strain DSM 21063 / JCM 11548 / VA1), this protein is Large ribosomal subunit protein uL24.